A 161-amino-acid polypeptide reads, in one-letter code: Epididymal protein 13 (161 aa).

A signal peptide spans 1–23 (MHRSEPFLKMSLLILLFLGLAEA). Asparagine 56 is a glycosylation site (N-linked (GlcNAc...) asparagine).

The protein localises to the secreted. This chain is Epididymal protein 13, found in Homo sapiens (Human).